The following is a 376-amino-acid chain: Nuclear hormone receptor family member nhr-124 (376 aa).

A DNA-binding region (nuclear receptor) is located at residues 11–89 (PNICAICHQK…LGMRYHNSSE (79 aa)). NR C4-type zinc fingers lie at residues 14 to 34 (CAIC…CNAC) and 50 to 72 (CKKG…CRSC). Positions 125–371 (HLHALNETRY…FSKILTEACR (247 aa)) constitute an NR LBD domain.

The protein belongs to the nuclear hormone receptor family.

It localises to the nucleus. Functionally, orphan nuclear receptor. In Caenorhabditis elegans, this protein is Nuclear hormone receptor family member nhr-124 (nhr-124).